Reading from the N-terminus, the 153-residue chain is Small ribosomal subunit protein uS19A (153 aa).

Belongs to the universal ribosomal protein uS19 family. As to quaternary structure, component of the small ribosomal subunit (SSU). Mature yeast ribosomes consist of a small (40S) and a large (60S) subunit. The 40S small subunit contains 1 molecule of ribosomal RNA (18S rRNA) and at least 33 different proteins. The large 60S subunit contains 3 rRNA molecules (25S, 5.8S and 5S rRNA) and at least 46 different proteins.

It localises to the cytoplasm. The protein localises to the nucleus. The protein resides in the nucleolus. Functionally, component of the ribosome, a large ribonucleoprotein complex responsible for the synthesis of proteins in the cell. The small ribosomal subunit (SSU) binds messenger RNAs (mRNAs) and translates the encoded message by selecting cognate aminoacyl-transfer RNA (tRNA) molecules. The large subunit (LSU) contains the ribosomal catalytic site termed the peptidyl transferase center (PTC), which catalyzes the formation of peptide bonds, thereby polymerizing the amino acids delivered by tRNAs into a polypeptide chain. The nascent polypeptides leave the ribosome through a tunnel in the LSU and interact with protein factors that function in enzymatic processing, targeting, and the membrane insertion of nascent chains at the exit of the ribosomal tunnel. uS19 is involved in the nuclear export of the small ribosomal subunit precursor. Has a role in the late stage of the assembly of pre-40S particles within the nucleus and controls their export to the cytoplasm. The polypeptide is Small ribosomal subunit protein uS19A (rps1501) (Schizosaccharomyces pombe (strain 972 / ATCC 24843) (Fission yeast)).